The following is a 712-amino-acid chain: UvrABC system protein B (712 aa).

The Helicase ATP-binding domain maps to 35-421 (RRVQAGEKDV…SDGAVEQIIR (387 aa)). 48 to 55 (GATGTGKS) contributes to the ATP binding site. The Beta-hairpin motif lies at 101-124 (YYDYYQPEAYVPQSDTYIEKDSSI). Positions 438 to 604 (QIDDLVHEIR…PLRKKINDIV (167 aa)) constitute a Helicase C-terminal domain. The disordered stretch occupies residues 625 to 655 (TKEGKGAKAPVPALGGQKTGGAKAARGRAKE). The 36-residue stretch at 667-702 (AEQIEDLTTRMRAAAADLQFEIAARLRDEVSEMKKE) folds into the UVR domain.

It belongs to the UvrB family. As to quaternary structure, forms a heterotetramer with UvrA during the search for lesions. Interacts with UvrC in an incision complex.

It localises to the cytoplasm. The UvrABC repair system catalyzes the recognition and processing of DNA lesions. A damage recognition complex composed of 2 UvrA and 2 UvrB subunits scans DNA for abnormalities. Upon binding of the UvrA(2)B(2) complex to a putative damaged site, the DNA wraps around one UvrB monomer. DNA wrap is dependent on ATP binding by UvrB and probably causes local melting of the DNA helix, facilitating insertion of UvrB beta-hairpin between the DNA strands. Then UvrB probes one DNA strand for the presence of a lesion. If a lesion is found the UvrA subunits dissociate and the UvrB-DNA preincision complex is formed. This complex is subsequently bound by UvrC and the second UvrB is released. If no lesion is found, the DNA wraps around the other UvrB subunit that will check the other stand for damage. In Streptomyces coelicolor (strain ATCC BAA-471 / A3(2) / M145), this protein is UvrABC system protein B.